The primary structure comprises 301 residues: Tyrosine recombinase XerD (301 aa).

One can recognise a Core-binding (CB) domain in the interval 7–90 (QFHTTILEQF…ALKVFFLFLK (84 aa)). Positions 109-294 (RLPSVLTPQE…AADSLIEKFL (186 aa)) constitute a Tyr recombinase domain. Active-site residues include R153, K175, H246, R249, and H272. Y281 functions as the O-(3'-phospho-DNA)-tyrosine intermediate in the catalytic mechanism.

Belongs to the 'phage' integrase family. XerD subfamily. As to quaternary structure, forms a cyclic heterotetrameric complex composed of two molecules of XerC and two molecules of XerD.

The protein resides in the cytoplasm. Functionally, site-specific tyrosine recombinase, which acts by catalyzing the cutting and rejoining of the recombining DNA molecules. The XerC-XerD complex is essential to convert dimers of the bacterial chromosome into monomers to permit their segregation at cell division. It also contributes to the segregational stability of plasmids. The chain is Tyrosine recombinase XerD from Chlamydia pneumoniae (Chlamydophila pneumoniae).